A 582-amino-acid polypeptide reads, in one-letter code: ATP-dependent lipid A-core flippase (582 aa).

Transmembrane regions (helical) follow at residues 16–36 (LWPT…ALIL), 64–84 (LLWM…TSYI), 153–173 (IIGL…ILVV), 253–273 (PIIQ…ASFP), and 275–295 (VMDS…IALM). The ABC transmembrane type-1 domain maps to 28-310 (IVAGIALILN…LTNVNAQFQR (283 aa)). The ABC transporter domain maps to 342 to 578 (LEFRNVTFTY…HGVYAQLHKM (237 aa)). An ATP-binding site is contributed by 376–383 (GRSGSGKS).

Belongs to the ABC transporter superfamily. Lipid exporter (TC 3.A.1.106) family. In terms of assembly, homodimer.

The protein resides in the cell inner membrane. The catalysed reaction is ATP + H2O + lipid A-core oligosaccharideSide 1 = ADP + phosphate + lipid A-core oligosaccharideSide 2.. In terms of biological role, involved in lipopolysaccharide (LPS) biosynthesis. Translocates lipid A-core from the inner to the outer leaflet of the inner membrane. Transmembrane domains (TMD) form a pore in the inner membrane and the ATP-binding domain (NBD) is responsible for energy generation. This Salmonella paratyphi A (strain ATCC 9150 / SARB42) protein is ATP-dependent lipid A-core flippase.